A 292-amino-acid chain; its full sequence is Protease HtpX (292 aa).

The next 2 membrane-spanning stretches (helical) occupy residues 4–24 (IALFLLTNLAVMLVFGLVLSL) and 34–54 (GLMIMAGLFGFGGSFVSLLMS). Zn(2+) is bound at residue His139. Residue Glu140 is part of the active site. His143 contributes to the Zn(2+) binding site. 2 helical membrane passes run 158 to 178 (IVNTFVIFISRLIAQAAAGFL) and 192 to 212 (MIYFGVSMVLELVFGILASII). Glu221 is a Zn(2+) binding site.

The protein belongs to the peptidase M48B family. Zn(2+) is required as a cofactor.

The protein localises to the cell inner membrane. The chain is Protease HtpX from Serratia proteamaculans (strain 568).